Consider the following 133-residue polypeptide: Nickel-responsive regulator (133 aa).

Ni(2+)-binding residues include H76, H87, H89, and C95.

The protein belongs to the transcriptional regulatory CopG/NikR family. In terms of assembly, homotetramer. Ni(2+) serves as cofactor.

Functionally, transcriptional repressor of the nikABCDE operon. Is active in the presence of excessive concentrations of intracellular nickel. The polypeptide is Nickel-responsive regulator (Salmonella paratyphi A (strain ATCC 9150 / SARB42)).